The primary structure comprises 159 residues: Phosphopantetheine adenylyltransferase (159 aa).

Substrate is bound at residue Thr9. Residues 9–10 and His17 contribute to the ATP site; that span reads TF. Positions 41, 73, and 87 each coordinate substrate. ATP contacts are provided by residues 88–90, Glu98, and 123–129; these read GLR and YSFISST.

This sequence belongs to the bacterial CoaD family. As to quaternary structure, homohexamer. Mg(2+) is required as a cofactor.

It localises to the cytoplasm. It carries out the reaction (R)-4'-phosphopantetheine + ATP + H(+) = 3'-dephospho-CoA + diphosphate. The protein operates within cofactor biosynthesis; coenzyme A biosynthesis; CoA from (R)-pantothenate: step 4/5. Functionally, reversibly transfers an adenylyl group from ATP to 4'-phosphopantetheine, yielding dephospho-CoA (dPCoA) and pyrophosphate. This Pseudomonas fluorescens (strain ATCC BAA-477 / NRRL B-23932 / Pf-5) protein is Phosphopantetheine adenylyltransferase.